Consider the following 55-residue polypeptide: Cytochrome c oxidase subunit 7s (55 aa).

A helical transmembrane segment spans residues 13–35; sequence LVQDIGVALILGSIAGCFFKYGV.

Slime mold cytochrome c oxidase consists of at least seven different polypeptides species, subunits I, II, III, IV, V, VI, and VIIe/s in order of MW.

The protein localises to the mitochondrion inner membrane. It catalyses the reaction 4 Fe(II)-[cytochrome c] + O2 + 8 H(+)(in) = 4 Fe(III)-[cytochrome c] + 2 H2O + 4 H(+)(out). In terms of biological role, this protein is one of the nuclear-coded polypeptide chains of cytochrome c oxidase, the terminal oxidase in mitochondrial electron transport. This chain is Cytochrome c oxidase subunit 7s (cxgS), found in Dictyostelium discoideum (Social amoeba).